We begin with the raw amino-acid sequence, 221 residues long: Transcription factor MYB1 (221 aa).

HTH myb-type domains follow at residues 1–57 and 58–112; these read MESV…LNYL and RPNI…QKKL. DNA-binding regions (H-T-H motif) lie at residues 33–57 and 85–108; these read WHQVPLRSGLNRCRKSCRMRWLNYL and WSLIAGRLPGRTSNDVKNYWNTHL. The disordered stretch occupies residues 126 to 154; the sequence is KTIVPKGTEAQPRAHPKSPPRPSPPSNNE.

As to expression, expressed in stems and leaves. Expressed at low levels in ovaries.

The protein localises to the nucleus. Functionally, transcription activator involved in the regulation of anthocyanin biosynthesis in red-fleshed kiwifruit varieties. Activates the transcription of genes involved in anthocyanin biosynthesis, such as dihydroflavonol reductase (DFR), anthocyanidin synthase (ANS) and UDP flavonoid glycosyltransferase (UFGT). In Actinidia chinensis var. chinensis (Chinese soft-hair kiwi), this protein is Transcription factor MYB1.